A 213-amino-acid polypeptide reads, in one-letter code: 3-isopropylmalate dehydratase small subunit (213 aa).

Belongs to the LeuD family. LeuD type 1 subfamily. Heterodimer of LeuC and LeuD.

It catalyses the reaction (2R,3S)-3-isopropylmalate = (2S)-2-isopropylmalate. Its pathway is amino-acid biosynthesis; L-leucine biosynthesis; L-leucine from 3-methyl-2-oxobutanoate: step 2/4. Functionally, catalyzes the isomerization between 2-isopropylmalate and 3-isopropylmalate, via the formation of 2-isopropylmaleate. This Magnetococcus marinus (strain ATCC BAA-1437 / JCM 17883 / MC-1) protein is 3-isopropylmalate dehydratase small subunit.